The following is a 195-amino-acid chain: O-methyltransferase (195 aa).

The protein belongs to the methyltransferase superfamily.

Its pathway is secondary metabolite biosynthesis. Functionally, O-methyltransferase; part of the gene cluster that mediates the biosynthesis of pyrophen and campyrone B, which represent a class of fungal amino acid-derived alpha-pyrone natural products. The first step of pyrophen biosynthesis is catalyzed by the PKS-NRPS hybrid synthetase ATPKS that uptakes and condensates L-phenylalanine and malonyl-CoA in order to produce desmethyldesacetylpyrophen. Although the A domain does not discriminate between 2 enantiomeric phenylalanines, the downstream KS domain must play a gate keeping role to stereoselectively accept the L-phenylalanyl-S-phosphopantetheine (Ppant)-T domain intermediate for chain elongation. The resulting amino acid derived diketide is off-loaded through lactonization to yield the alpha-pyrone intermediate desmethyldesacetylpyrophen. The cluster-specific O-methyltransferase (OMT) then methylates desmethyldesacetylpyrophen to desacetylpyrophen, which is further acetylated to pyrophen by an endogenous yet unidentified N-acetyltransferase. ATPKS has relaxed substrate specificity to activate and extend branched-chain amino acid L-leucine to produce small amounts of campyrone B. The sequence is that of O-methyltransferase from Aspergillus niger (strain ATCC 1015 / CBS 113.46 / FGSC A1144 / LSHB Ac4 / NCTC 3858a / NRRL 328 / USDA 3528.7).